Reading from the N-terminus, the 765-residue chain is Multifunctional tryptophan biosynthesis protein (765 aa).

The 195-residue stretch at 2–196 (ATLLIDNYDS…LSLRGGNWDE (195 aa)) folds into the Glutamine amidotransferase type-1 domain. 53–55 (GPG) contacts L-glutamine. The active-site Nucleophile; for GATase activity is the Cys81. L-glutamine contacts are provided by residues Gln85 and 131–132 (SL). Active-site for GATase activity residues include His170 and Glu172. The tract at residues 231 to 494 (TILSRIYAQR…NLKEFVAELL (264 aa)) is indole-3-glycerol phosphate synthase. The interval 512–765 (QVKICGISSV…VEKAKSINLQ (254 aa)) is N-(5'-phosphoribosyl)anthranilate isomerase.

It carries out the reaction N-(5-phospho-beta-D-ribosyl)anthranilate = 1-(2-carboxyphenylamino)-1-deoxy-D-ribulose 5-phosphate. The enzyme catalyses 1-(2-carboxyphenylamino)-1-deoxy-D-ribulose 5-phosphate + H(+) = (1S,2R)-1-C-(indol-3-yl)glycerol 3-phosphate + CO2 + H2O. It catalyses the reaction chorismate + L-glutamine = anthranilate + pyruvate + L-glutamate + H(+). Its pathway is amino-acid biosynthesis; L-tryptophan biosynthesis; L-tryptophan from chorismate: step 1/5. The protein operates within amino-acid biosynthesis; L-tryptophan biosynthesis; L-tryptophan from chorismate: step 3/5. It functions in the pathway amino-acid biosynthesis; L-tryptophan biosynthesis; L-tryptophan from chorismate: step 4/5. Its function is as follows. Trifunctional enzyme bearing the Gln amidotransferase (GATase) domain of anthranilate synthase, indole-glycerolphosphate synthase, and phosphoribosylanthranilate isomerase activities. In Phycomyces blakesleeanus, this protein is Multifunctional tryptophan biosynthesis protein (trp1).